We begin with the raw amino-acid sequence, 283 residues long: ATP phosphoribosyltransferase (283 aa).

The protein belongs to the ATP phosphoribosyltransferase family. Long subfamily. The cofactor is Mg(2+).

It localises to the cytoplasm. The catalysed reaction is 1-(5-phospho-beta-D-ribosyl)-ATP + diphosphate = 5-phospho-alpha-D-ribose 1-diphosphate + ATP. It functions in the pathway amino-acid biosynthesis; L-histidine biosynthesis; L-histidine from 5-phospho-alpha-D-ribose 1-diphosphate: step 1/9. With respect to regulation, feedback inhibited by histidine. In terms of biological role, catalyzes the condensation of ATP and 5-phosphoribose 1-diphosphate to form N'-(5'-phosphoribosyl)-ATP (PR-ATP). Has a crucial role in the pathway because the rate of histidine biosynthesis seems to be controlled primarily by regulation of HisG enzymatic activity. This is ATP phosphoribosyltransferase from Rhodococcus jostii (strain RHA1).